The following is a 480-amino-acid chain: Putative auxin transporter-like protein 4 (480 aa).

Over 1–66 (MASEKVETIV…DAWFSCASNQ (66 aa)) the chain is Cytoplasmic. A helical transmembrane segment spans residues 67 to 84 (VAQVLLTLPYSFSQLGMA). At 85–86 (SG) the chain is on the extracellular side. The helical transmembrane segment at 87 to 107 (VAFQVFYGLMGSWTAYLISVL) threads the bilayer. Residues 108-143 (YVEYRTRRERDKVDFRNHVIQWFEVLDGLLGRHWRN) lie on the Cytoplasmic side of the membrane. A helical membrane pass occupies residues 144–164 (AGLLFNCTFLLFGSVIQLIAC). Residues 165–179 (ASNIYYINDRLDKRT) are Extracellular-facing. Residues 180–200 (WTYIFGACCATTVFVPSFHNY) traverse the membrane as a helical segment. Over 201 to 203 (RVW) the chain is Cytoplasmic. The chain crosses the membrane as a helical span at residues 204–224 (SFLGLLMTSYTAWYLTVAAVV). The Extracellular segment spans residues 225-241 (HGKVDGAAPRAGPSKTM). Residues 242-262 (VLYFTGATNILYTFGGHAVTV) form a helical membrane-spanning segment. Over 263–275 (EIMHAMWRPRRFK) the chain is Cytoplasmic. The chain crosses the membrane as a helical span at residues 276–296 (MIYLAATAYVLTLTLPSAAAM). Topologically, residues 297-323 (YWAFGDALLDHSNAFALLPRTPWRDAA) are extracellular. The helical transmembrane segment at 324–344 (VVLMLIHQFITFGFACTPLYF) threads the bilayer. At 345-365 (VWEKAIGVHGGAGVLRRAAAR) the chain is on the cytoplasmic side. A helical membrane pass occupies residues 366–386 (LPVVLPIWFLAVIFPFFGPIN). A topological domain (extracellular) is located at residue Ser-387. Residues 388–408 (TVGSFLVSFTVYIIPAMAHMA) traverse the membrane as a helical segment. The Cytoplasmic portion of the chain corresponds to 409-433 (TFAPAAARENAVEPPPRALGGWPGT). A helical membrane pass occupies residues 434-454 (FAANCFVVAWVLVVGFGFGGW). Topologically, residues 455-480 (ASTVNFVRQVDTFGLFTKCYQCPPRH) are extracellular.

It belongs to the amino acid/polyamine transporter 2 family. Amino acid/auxin permease (AAAP) (TC 2.A.18.1) subfamily.

It localises to the cell membrane. Functionally, carrier protein involved in proton-driven auxin influx. May mediate the formation of auxin gradient from developing leaves (site of auxin biosynthesis) to tips. The chain is Putative auxin transporter-like protein 4 from Oryza sativa subsp. japonica (Rice).